Here is a 237-residue protein sequence, read N- to C-terminus: Cytosolic-abundant heat soluble protein 1 (237 aa).

Composition is skewed to basic and acidic residues over residues 1-17 (MPYE…KTEQ) and 91-105 (VDMR…EARR). Disordered stretches follow at residues 1 to 35 (MPYE…VARE) and 85 to 105 (SGAS…EARR). Positions 98-201 (KLAEEARRDA…KEALERSRMA (104 aa)) form a coiled coil. 2 CAHS motif regions span residues 132–150 (YRHQ…LEKQ) and 169–187 (QKRE…LDRE). The segment at 212 to 237 (AGHTVSGGTTVSSVDKVETVRERKHH) is disordered. Over residues 226–237 (DKVETVRERKHH) the composition is skewed to basic and acidic residues.

The protein belongs to the Cytosolic-abundant heat soluble protein (CAHS) family.

The protein localises to the cytoplasm. It is found in the nucleus. CAHS proteins are cytosolic heat soluble proteins that seem to contribute to the anhydrobiosis in tardigrades, but their specific mechanisms are yet to be identified. It is possible that protection during anhydrobiosis might occur via the stabilization of vitrifying small molecules such as sugars, but not via the direct glass transition of CAHS proteins themselves. This Ramazzottius varieornatus (Water bear) protein is Cytosolic-abundant heat soluble protein 1.